Reading from the N-terminus, the 210-residue chain is Large ribosomal subunit protein uL4 (210 aa).

The protein belongs to the universal ribosomal protein uL4 family. Part of the 50S ribosomal subunit.

One of the primary rRNA binding proteins, this protein initially binds near the 5'-end of the 23S rRNA. It is important during the early stages of 50S assembly. It makes multiple contacts with different domains of the 23S rRNA in the assembled 50S subunit and ribosome. Functionally, forms part of the polypeptide exit tunnel. The protein is Large ribosomal subunit protein uL4 (rplD) of Thermus thermophilus.